Here is a 183-residue protein sequence, read N- to C-terminus: uncharacterized protein (183 aa).

4 helical membrane passes run 26–48, 72–91, 104–121, and 125–147; these read FVAI…IIFY, LLVR…KVFI, IIEA…LIVF, and FTFW…YVLL.

Its subcellular location is the cell membrane. This is an uncharacterized protein from Aquifex aeolicus (strain VF5).